A 461-amino-acid chain; its full sequence is ATP synthase subunit beta 2 (461 aa).

151-158 serves as a coordination point for ATP; sequence GGAGVGKT.

The protein belongs to the ATPase alpha/beta chains family. F-type ATPases have 2 components, CF(1) - the catalytic core - and CF(0) - the membrane proton channel. CF(1) has five subunits: alpha(3), beta(3), gamma(1), delta(1), epsilon(1). CF(0) has three main subunits: a(1), b(2) and c(9-12). The alpha and beta chains form an alternating ring which encloses part of the gamma chain. CF(1) is attached to CF(0) by a central stalk formed by the gamma and epsilon chains, while a peripheral stalk is formed by the delta and b chains.

It localises to the cell inner membrane. The enzyme catalyses ATP + H2O + 4 H(+)(in) = ADP + phosphate + 5 H(+)(out). Its function is as follows. Produces ATP from ADP in the presence of a proton gradient across the membrane. The catalytic sites are hosted primarily by the beta subunits. This Photobacterium profundum (strain SS9) protein is ATP synthase subunit beta 2.